Reading from the N-terminus, the 478-residue chain is GTPase Obg (478 aa).

The 158-residue stretch at 2–159 folds into the Obg domain; that stretch reads TTFVDRVELH…RDIVLELKTV (158 aa). The segment at 61–87 is disordered; sequence HHSPHRKATNGQPGAGDNRSGKDGQDL. The OBG-type G domain occupies 160–330; sequence ADVALVGYPS…LSFALAGIIA (171 aa). GTP contacts are provided by residues 166-173, 191-195, 212-215, 282-285, and 311-313; these read GYPSAGKS, FTTLV, DVPG, NKVD, and SAI. Positions 173 and 193 each coordinate Mg(2+). The OCT domain maps to 348-430; it reads PRAVDDAGFT…ENAVVFDWEP (83 aa). Residues 436 to 478 are disordered; sequence AEMLGRRGEDHRLEEPRPAAQRRRERDAERDDAEKEYDEFDPF. The segment covering 439–468 has biased composition (basic and acidic residues); sequence LGRRGEDHRLEEPRPAAQRRRERDAERDDA. Acidic residues predominate over residues 469–478; that stretch reads EKEYDEFDPF.

This sequence belongs to the TRAFAC class OBG-HflX-like GTPase superfamily. OBG GTPase family. In terms of assembly, monomer. Mg(2+) serves as cofactor.

Its subcellular location is the cytoplasm. In terms of biological role, an essential GTPase which binds GTP, GDP and possibly (p)ppGpp with moderate affinity, with high nucleotide exchange rates and a fairly low GTP hydrolysis rate. Plays a role in control of the cell cycle, stress response, ribosome biogenesis and in those bacteria that undergo differentiation, in morphogenesis control. The polypeptide is GTPase Obg (Streptomyces griseus subsp. griseus (strain JCM 4626 / CBS 651.72 / NBRC 13350 / KCC S-0626 / ISP 5235)).